A 159-amino-acid chain; its full sequence is Protein C2 (159 aa).

A Nuclear localization signal motif is present at residues 43-60 (KKRPPKLTWAPKKKRRKA). Residues 65–81 (CGCSYYGGIDCEDGFTH) fold into a zinc finger. The segment at 102-139 (PNLLPPPEHNNNGDGEQNNNITNQSQPQPAESVGSPDL) is disordered. Low complexity predominate over residues 110–124 (HNNNGDGEQNNNITN).

The protein belongs to the geminiviridae transcriptional activator protein family. Monomer. Suppress local silencing by interacting with and inactivating host adenosine kinase 2 (ADK2) in the cytoplasm. Interacts with and inhibits host SNF1 kinase.

Its subcellular location is the host cytoplasm. Its function is as follows. Acts as a suppressor of RNA-mediated gene silencing, also known as post-transcriptional gene silencing (PTGS), a mechanism of plant viral defense that limits the accumulation of viral RNAs. Suppresses the host RNA silencing by inhibiting adenosine kinase 2 (ADK2), a kinase involved in a general methylation pathway. Also suppresses the host basal defense by interacting with and inhibiting SNF1 kinase, a key regulator of cell metabolism implicated in innate antiviral defense. Determines pathogenicity. This is Protein C2 from Tomato pseudo-curly top virus (TPCTV).